The following is a 196-amino-acid chain: Carnitine operon protein CaiE (196 aa).

Residues 173–196 (TQPLRQMEGNRPRLQGTTDVAPKR) are disordered.

This sequence belongs to the transferase hexapeptide repeat family.

It functions in the pathway amine and polyamine metabolism; carnitine metabolism. Functionally, overproduction of CaiE stimulates the activity of CaiB and CaiD. This chain is Carnitine operon protein CaiE, found in Escherichia coli (strain SMS-3-5 / SECEC).